The following is a 259-amino-acid chain: Proteasome subunit alpha (259 aa).

This sequence belongs to the peptidase T1A family. As to quaternary structure, the 20S proteasome core is composed of 14 alpha and 14 beta subunits that assemble into four stacked heptameric rings, resulting in a barrel-shaped structure. The two inner rings, each composed of seven catalytic beta subunits, are sandwiched by two outer rings, each composed of seven alpha subunits. The catalytic chamber with the active sites is on the inside of the barrel. Has a gated structure, the ends of the cylinder being occluded by the N-termini of the alpha-subunits. Is capped at one or both ends by the proteasome regulatory ATPase, PAN.

The protein localises to the cytoplasm. Its activity is regulated as follows. The formation of the proteasomal ATPase PAN-20S proteasome complex, via the docking of the C-termini of PAN into the intersubunit pockets in the alpha-rings, triggers opening of the gate for substrate entry. Interconversion between the open-gate and close-gate conformations leads to a dynamic regulation of the 20S proteasome proteolysis activity. Its function is as follows. Component of the proteasome core, a large protease complex with broad specificity involved in protein degradation. The chain is Proteasome subunit alpha from Methanococcus maripaludis (strain DSM 14266 / JCM 13030 / NBRC 101832 / S2 / LL).